We begin with the raw amino-acid sequence, 309 residues long: Small ribosomal subunit biogenesis GTPase RsgA (309 aa).

The CP-type G domain maps to 88-247; the sequence is KNLITRPPVA…IADTPGFNKP (160 aa). Residues 137–140 and 189–197 each bind GTP; these read TKRD and GPSGVGKSS. 4 residues coordinate Zn(2+): cysteine 272, cysteine 277, histidine 279, and cysteine 285.

Belongs to the TRAFAC class YlqF/YawG GTPase family. RsgA subfamily. In terms of assembly, monomer. Associates with 30S ribosomal subunit, binds 16S rRNA. Zn(2+) serves as cofactor.

It is found in the cytoplasm. Its function is as follows. One of several proteins that assist in the late maturation steps of the functional core of the 30S ribosomal subunit. Helps release RbfA from mature subunits. May play a role in the assembly of ribosomal proteins into the subunit. Circularly permuted GTPase that catalyzes slow GTP hydrolysis, GTPase activity is stimulated by the 30S ribosomal subunit. The chain is Small ribosomal subunit biogenesis GTPase RsgA from Prochlorococcus marinus (strain SARG / CCMP1375 / SS120).